The following is a 271-amino-acid chain: Sec-independent protein translocase protein TatC (271 aa).

A run of 5 helical transmembrane segments spans residues 24-44 (ISVG…EQIF), 78-98 (FFAG…LFIA), 112-132 (FLFV…YFVF), 159-179 (LVIK…GLLL), and 215-235 (FTQV…IFFG). The disordered stretch occupies residues 247 to 271 (AAEEAQWAADHNVDDDDVDHPEHKA).

This sequence belongs to the TatC family. In terms of assembly, the Tat system comprises two distinct complexes: a TatABC complex, containing multiple copies of TatA, TatB and TatC subunits, and a separate TatA complex, containing only TatA subunits. Substrates initially bind to the TatABC complex, which probably triggers association of the separate TatA complex to form the active translocon.

Its subcellular location is the cell inner membrane. Its function is as follows. Part of the twin-arginine translocation (Tat) system that transports large folded proteins containing a characteristic twin-arginine motif in their signal peptide across membranes. Together with TatB, TatC is part of a receptor directly interacting with Tat signal peptides. This is Sec-independent protein translocase protein TatC from Magnetococcus marinus (strain ATCC BAA-1437 / JCM 17883 / MC-1).